We begin with the raw amino-acid sequence, 248 residues long: Glutathione S-transferase omega-2 (248 aa).

The region spanning 22 to 101 (GVIRIYSMRF…YLDDVFPGRK (80 aa)) is the GST N-terminal domain. Cys-32 (nucleophile) is an active-site residue. Residues Lys-59, Val-72, and 85-86 (ES) contribute to the glutathione site. One can recognise a GST C-terminal domain in the interval 106–231 (DPYERARQKM…IFLGFLNLYF (126 aa)).

Belongs to the GST superfamily. Omega family.

It catalyses the reaction RX + glutathione = an S-substituted glutathione + a halide anion + H(+). The enzyme catalyses L-dehydroascorbate + 2 glutathione = glutathione disulfide + L-ascorbate. It carries out the reaction methylarsonate + 2 glutathione + H(+) = methylarsonous acid + glutathione disulfide + H2O. In terms of biological role, exhibits glutathione-dependent thiol transferase activity. Has high dehydroascorbate reductase activity and may contribute to the recycling of ascorbic acid. Participates in the biotransformation of inorganic arsenic and reduces monomethylarsonic acid (MMA). In Rattus norvegicus (Rat), this protein is Glutathione S-transferase omega-2 (Gsto2).